The following is a 436-amino-acid chain: UPF0597 protein YhaM (436 aa).

Belongs to the UPF0597 family.

The chain is UPF0597 protein YhaM from Salmonella paratyphi B (strain ATCC BAA-1250 / SPB7).